The chain runs to 235 residues: MNKQFHSCSPDPDDGEKLDIDYLSDEGPSTLIFEPSELIDFRVAWDWQKQRQKLLFEKPGSSQAVWLLEHSECYTLGRGATEDNLLFNLSNSPWDVYRIDRGGEVTHHMPGQLVVYLVLDLRRYKTDLNWYLRQLELVLLDTLKDLGIVGKRIDGITGVWINDFKVASIGVGCRRWITQHGLSINVDCDLRGFERIIPCGLTGSKVGKLSSLIPDLKTVDVKPFIKKSLTERFGL.

In terms of domain architecture, BPL/LPL catalytic spans 59–235 (PGSSQAVWLL…KKSLTERFGL (177 aa)). Substrate is bound by residues 101–108 (RGGEVTHH), 168–170 (SIG), and 181–183 (GLS). Residue Cys-199 is the Acyl-thioester intermediate of the active site.

This sequence belongs to the LipB family.

It localises to the cytoplasm. It catalyses the reaction octanoyl-[ACP] + L-lysyl-[protein] = N(6)-octanoyl-L-lysyl-[protein] + holo-[ACP] + H(+). It participates in protein modification; protein lipoylation via endogenous pathway; protein N(6)-(lipoyl)lysine from octanoyl-[acyl-carrier-protein]: step 1/2. In terms of biological role, catalyzes the transfer of endogenously produced octanoic acid from octanoyl-acyl-carrier-protein onto the lipoyl domains of lipoate-dependent enzymes. Lipoyl-ACP can also act as a substrate although octanoyl-ACP is likely to be the physiological substrate. This chain is Octanoyltransferase, found in Prochlorococcus marinus (strain MIT 9211).